Reading from the N-terminus, the 272-residue chain is Hydroxyacylglutathione hydrolase (272 aa).

Residues histidine 62, histidine 64, aspartate 66, histidine 67, histidine 126, aspartate 146, and histidine 184 each contribute to the Zn(2+) site.

It belongs to the metallo-beta-lactamase superfamily. Glyoxalase II family. In terms of assembly, monomer. Zn(2+) is required as a cofactor.

The enzyme catalyses an S-(2-hydroxyacyl)glutathione + H2O = a 2-hydroxy carboxylate + glutathione + H(+). The protein operates within secondary metabolite metabolism; methylglyoxal degradation; (R)-lactate from methylglyoxal: step 2/2. Thiolesterase that catalyzes the hydrolysis of S-D-lactoyl-glutathione to form glutathione and D-lactic acid. This Saccharophagus degradans (strain 2-40 / ATCC 43961 / DSM 17024) protein is Hydroxyacylglutathione hydrolase.